The following is an 830-amino-acid chain: DNA helicase MCM8 (830 aa).

In terms of domain architecture, MCM spans 394–601 (LFRIIVNSLC…DHDHLLSEHV (208 aa)). An ATP-binding site is contributed by 446–453 (GDPGLGKS).

The protein belongs to the MCM family. In terms of assembly, component of the MCM8-MCM9 complex, which forms a hexamer composed of MCM8 and MCM9.

The protein localises to the nucleus. It catalyses the reaction ATP + H2O = ADP + phosphate + H(+). Its function is as follows. Component of the MCM8-MCM9 complex, a complex involved in homologous recombination repair following DNA interstrand cross-links and plays a key role during gametogenesis. The MCM8-MCM9 complex probably acts as a hexameric helicase required to process aberrant forks into homologous recombination substrates and to orchestrate homologous recombination with resection, fork stabilization and fork restart. The protein is DNA helicase MCM8 (MCM8) of Gallus gallus (Chicken).